An 89-amino-acid chain; its full sequence is Dynein light chain 1, cytoplasmic (89 aa).

Lys36 bears the N6-acetyllysine mark. Lys43 is covalently cross-linked (Glycyl lysine isopeptide (Lys-Gly) (interchain with G-Cter in SUMO2)). Positions 67-89 are interaction with ESR1; sequence THETKHFIYFYLGQVAILLFKSG. A Phosphoserine modification is found at Ser88.

Belongs to the dynein light chain family. In terms of assembly, homodimer. Monomer; the monomeric form is incapable of binding to target proteins. The cytoplasmic dynein 1 complex consists of two catalytic heavy chains (HCs) and a number of non-catalytic subunits presented by intermediate chains (ICs), light intermediate chains (LICs) and light chains (LCs); the composition seems to vary in respect to the IC, LIC and LC composition. The heavy chain homodimer serves as a scaffold for the probable homodimeric assembly of the respective non-catalytic subunits. The ICs and LICs bind directly to the HC dimer and the LCs assemble on the IC dimer. Interacts with TXNDC17. Interacts with WWC1 and ESR1. The WWC1-DYNLL1 interaction is mandatory for the recruitment and transactivation functions of ESR1 or DYNLL1 to the target chromatin. Interacts with BCL2L11. Interacts with BCL2; the interaction is greatly enhanced in the nucleus and in mitochondria upon induction of apoptosis. Interacts with PAK1; the interaction requires dimeric DYNLL1. Interacts with MYZAP. Part of an astrin (SPAG5)-kinastrin (SKAP) complex containing KNSTRN, SPAG5, PLK1, DYNLL1 and SGO2. Interacts with ATMIN; this interaction inhibits ATMIN transcriptional activity and hence may play a role in a feedback loop whereby DYNLL1 inhibits transactivation of its own promoter by ATMIN. Interacts with NEK9 (not phosphorylated at 'Ser-944'). Interacts with BICD2. Interacts with BCAS1. Interacts with Basson/BSN. Interacts with HDAC6. Interacts with TPPP. Interacts with AMBRA1 (via TQT motifs); tethering AMBRA1 to the cytoskeleton. Interacts with FAM83D/CHICA (via C-terminus). Interacts with HMMR, SPAG5/Astrin and KNSTRN/Kinastrin. Interacts with TLK2. Interacts with NOS1. Interacts with WWC1, WWC2 and WWC3. Interacts with MRE11; inhibiting MRE11 homodimerization and activity. As to quaternary structure, (Microbial infection) Interacts with bovine immunodeficiency virus Gag protein; this interaction is critical for intracellular microtubule-dependent viral genome transport. Post-translationally, phosphorylation at Ser-88 promotes recruitment to DNA double-strand breaks (DSBs) by TP53BP1 and ability to inhibit MRE11.

It localises to the cytoplasm. It is found in the cytoskeleton. Its subcellular location is the microtubule organizing center. The protein resides in the centrosome. The protein localises to the chromosome. It localises to the nucleus. It is found in the mitochondrion. Acts as one of several non-catalytic accessory components of the cytoplasmic dynein 1 complex that are thought to be involved in linking dynein to cargos and to adapter proteins that regulate dynein function. Cytoplasmic dynein 1 acts as a motor for the intracellular retrograde motility of vesicles and organelles along microtubules. May play a role in changing or maintaining the spatial distribution of cytoskeletal structures. In addition to its role in cytoskeleton and transport, acts as a protein-protein adapter, which inhibits and/or sequesters target proteins. Involved in the response to DNA damage by acting as a key regulator of DNA end resection: when phosphorylated at Ser-88, recruited to DNA double-strand breaks (DSBs) by TP53BP1 and acts by disrupting MRE11 dimerization, thereby inhibiting DNA end resection. In a subset of DSBs, DYNLL1 remains unphosphorylated and promotes the recruitment of the Shieldin complex. Binds and inhibits the catalytic activity of neuronal nitric oxide synthase/NOS1. Promotes transactivation functions of ESR1 and plays a role in the nuclear localization of ESR1. Regulates apoptotic activities of BCL2L11 by sequestering it to microtubules. Upon apoptotic stimuli the BCL2L11-DYNLL1 complex dissociates from cytoplasmic dynein and translocates to mitochondria and sequesters BCL2 thus neutralizing its antiapoptotic activity. The polypeptide is Dynein light chain 1, cytoplasmic (DYNLL1) (Bos taurus (Bovine)).